We begin with the raw amino-acid sequence, 428 residues long: Histone deacetylase 3 (428 aa).

Residues 3-316 (KTVAYFYDPD…WTYETSLLVE (314 aa)) are histone deacetylase. The 1D-myo-inositol 1,4,5,6-tetrakisphosphate site is built by histidine 17, glycine 21, and lysine 25. Residue histidine 135 is part of the active site. Residues aspartate 170, histidine 172, and aspartate 259 each coordinate Zn(2+). A 1D-myo-inositol 1,4,5,6-tetrakisphosphate-binding site is contributed by arginine 265. Basic and acidic residues-rich tracts occupy residues 388 to 405 (DRTD…ENYS) and 415 to 428 (DGDH…DVEI). The tract at residues 388 to 428 (DRTDEADAEERGPEENYSRPEAPNEFYDGDHDNDKESDVEI) is disordered. A Phosphoserine modification is found at serine 424.

It belongs to the histone deacetylase family. HD type 1 subfamily. As to quaternary structure, interacts with HDAC7 and HDAC9. Interacts with DAXX, KDM4A, HDAC10 and DACH1. Found in a complex with NCOR1 and NCOR2. Component of the N-Cor repressor complex, at least composed of NCOR1, NCOR2, HDAC3, TBL1X, TBL1R, CORO2A and GPS2. Interacts with BCOR, MJD2A/JHDM3A, NRIP1, PRDM6 and SRY. Interacts with BTBD14B. Interacts with GLIS2. Interacts (via the DNA-binding domain) with NR2C1; the interaction recruits phosphorylated NR2C1 to PML bodies for sumoylation. Component of the Notch corepressor complex. Interacts with CBFA2T3 and NKAP. Interacts with APEX1; the interaction is not dependent on the acetylated status of APEX1. Interacts with ZMYND15. Interacts with SMRT/NCOR2 and BCL6 on DNA enhancer elements. Interacts with INSM1. Interacts with XBP1 isoform 1; the interaction occurs in endothelial cell (EC) under disturbed flow. Interacts (via C-terminus) with CCAR2 (via N-terminus). Interacts with and deacetylates MEF2D. Interacts with BEND3. Interacts with NKAPL. Interacts with DHX36; this interaction occurs in a RNA-dependent manner. Interacts weakly with CRY1; this interaction is enhanced in the presence of FBXL3. Interacts with FBXL3 and BMAL1. Interacts with NCOR1. Interacts with RARA. Interacts with SETD5. Post-translationally, sumoylated in vitro. In terms of processing, deubiquitinated on 'Lys-63'-linked ubiquitin chains by USP38; leading to a decreased level of histone acetylation.

It localises to the nucleus. The protein resides in the chromosome. It is found in the cytoplasm. Its subcellular location is the cytosol. It carries out the reaction N(6)-acetyl-L-lysyl-[histone] + H2O = L-lysyl-[histone] + acetate. The enzyme catalyses N(6)-acetyl-L-lysyl-[protein] + H2O = L-lysyl-[protein] + acetate. It catalyses the reaction N(6)-(2E)-butenoyl-L-lysyl-[protein] + H2O = (2E)-2-butenoate + L-lysyl-[protein]. The catalysed reaction is N(6)-(2-hydroxyisobutanoyl)-L-lysyl-[protein] + H2O = 2-hydroxy-2-methylpropanoate + L-lysyl-[protein]. It carries out the reaction N(6)-[(S)-lactoyl]-L-lysyl-[protein] + H2O = (S)-lactate + L-lysyl-[protein]. With respect to regulation, inositol tetraphosphate (1D-myo-inositol 1,4,5,6-tetrakisphosphate) promotes the histone deacetylase activity by acting as an intermolecular glue between HDAC3 and NCOR2, thereby promoting its association with the N-Cor complex, a prerequisite for the histone deacetylase activity. Histone deacetylase that catalyzes the deacetylation of lysine residues on the N-terminal part of the core histones (H2A, H2B, H3 and H4), and some other non-histone substrates. Histone deacetylation gives a tag for epigenetic repression and plays an important role in transcriptional regulation, cell cycle progression and developmental events. Histone deacetylases act via the formation of large multiprotein complexes, such as N-Cor repressor complex, which activate the histone deacetylase activity. Participates in the BCL6 transcriptional repressor activity by deacetylating the H3 'Lys-27' (H3K27) on enhancer elements, antagonizing EP300 acetyltransferase activity and repressing proximal gene expression. Acts as a molecular chaperone for shuttling phosphorylated NR2C1 to PML bodies for sumoylation. Contributes, together with XBP1 isoform 1, to the activation of NFE2L2-mediated HMOX1 transcription factor gene expression in a PI(3)K/mTORC2/Akt-dependent signaling pathway leading to endothelial cell (EC) survival under disturbed flow/oxidative stress. Regulates both the transcriptional activation and repression phases of the circadian clock in a deacetylase activity-independent manner. During the activation phase, promotes the accumulation of ubiquitinated BMAL1 at the E-boxes and during the repression phase, blocks FBXL3-mediated CRY1/2 ubiquitination and promotes the interaction of CRY1 and BMAL1. The NCOR1-HDAC3 complex regulates the circadian expression of the core clock gene BMAL1 and the genes involved in lipid metabolism in the liver. Also functions as deacetylase for non-histone targets, such as KAT5, MEF2D, MAPK14, RARA and STAT3. Serves as a corepressor of RARA, mediating its deacetylation and repression, leading to inhibition of RARE DNA element binding. In addition to protein deacetylase activity, also acts as a protein-lysine deacylase by recognizing other acyl groups: catalyzes removal of (2E)-butenoyl (crotonyl), lactoyl (lactyl) and 2-hydroxyisobutanoyl (2-hydroxyisobutyryl) acyl groups from lysine residues, leading to protein decrotonylation, delactylation and de-2-hydroxyisobutyrylation, respectively. Catalyzes decrotonylation of MAPRE1/EB1. Mediates delactylation NBN/NBS1, thereby inhibiting DNA double-strand breaks (DSBs) via homologous recombination (HR). This Mus musculus (Mouse) protein is Histone deacetylase 3.